The chain runs to 182 residues: ATP synthase subunit delta (182 aa).

This sequence belongs to the ATPase delta chain family. As to quaternary structure, F-type ATPases have 2 components, F(1) - the catalytic core - and F(0) - the membrane proton channel. F(1) has five subunits: alpha(3), beta(3), gamma(1), delta(1), epsilon(1). F(0) has three main subunits: a(1), b(2) and c(10-14). The alpha and beta chains form an alternating ring which encloses part of the gamma chain. F(1) is attached to F(0) by a central stalk formed by the gamma and epsilon chains, while a peripheral stalk is formed by the delta and b chains.

It is found in the cell inner membrane. F(1)F(0) ATP synthase produces ATP from ADP in the presence of a proton or sodium gradient. F-type ATPases consist of two structural domains, F(1) containing the extramembraneous catalytic core and F(0) containing the membrane proton channel, linked together by a central stalk and a peripheral stalk. During catalysis, ATP synthesis in the catalytic domain of F(1) is coupled via a rotary mechanism of the central stalk subunits to proton translocation. In terms of biological role, this protein is part of the stalk that links CF(0) to CF(1). It either transmits conformational changes from CF(0) to CF(1) or is implicated in proton conduction. The polypeptide is ATP synthase subunit delta (Myxococcus xanthus (strain DK1622)).